Here is a 26-residue protein sequence, read N- to C-terminus: RELLMGIFEKNGTGKTAAFVIPLLQK.

Positions 1–10 (RELLMGIFEK) match the Q motif motif. Residue 11 to 16 (NGTGKT) coordinates ATP. Residues 11-26 (NGTGKTAAFVIPLLQK) enclose the Helicase ATP-binding domain.

The protein belongs to the DEAD box helicase family. DDX6/DHH1 subfamily.

The protein resides in the cytoplasm. The protein localises to the P-body. The catalysed reaction is ATP + H2O = ADP + phosphate + H(+). Its function is as follows. ATP-dependent RNA helicase involved in mRNA turnover, and more specifically in mRNA decapping. The sequence is that of DEAD-box ATP-dependent RNA helicase 1 from Catharanthus roseus (Madagascar periwinkle).